A 267-amino-acid chain; its full sequence is Short-chain dehydrogenase/reductase GME11361 (267 aa).

Residues I10, T36, K42, D57, N80, Y129, K133, V162, and S164 each contribute to the NADP(+) site. The active-site Proton acceptor is the Y129. The active-site Lowers pKa of active site Tyr is the K133.

Belongs to the short-chain dehydrogenases/reductases (SDR) family.

It functions in the pathway secondary metabolite biosynthesis. In terms of biological role, short-chain dehydrogenase/reductase; part of the gene cluster that mediates the biosynthesis of dibenzodioxocinones such as pestalotiollide B, a novel class of inhibitors against cholesterol ester transfer protein (CEPT). The biosynthesis initiates from condensation of acetate and malonate units catalyzed by the non-reducing PKS pks8/GME11356. Pks8/GME11356 lacks a thioesterase (TE) domain, which is important to the cyclizing of the third ring of atrochrysone carboxylic acid, and the esterase GME11355 might play the role of TE and catalyzes the cyclization reaction of the C ring. The lactamase-like protein GME11357 (or other beta-lactamases in Pestalotiopsis microspora) probably hydrolyzes the thioester bond between the ACP of pks8/GME11356 and the intermediate to release atrochrysone carboxylic acid, which is spontaneously dehydrates to form endocrocin anthrone. Endocrocin anthrone is further converted to emodin via the endocrocin intermediate. Emodin is then oxidized by several enzymes such as the Baeyer-Villiger oxidase GME11358, the oxidoreductase GME11367, the short chain dehydrogenase/reductase GME11373, as well as by other oxidoreductases from the cluster, to modify the A and C rings and open the B ring, and finally yield monodictyphenone. The prenyltransferase GME11375 may catalyze the addition reaction between the C5 side chains and the carbon bone of dibenzodioxocinones. The remaining biochemical reactions to the final product dibenzodioxocinones should be methylation catalyzed by methyltransferase GME11366 and reduction and lactonization reaction catalyzed by a series of oxidordeuctases. The polypeptide is Short-chain dehydrogenase/reductase GME11361 (Pestalotiopsis microspora).